Reading from the N-terminus, the 70-residue chain is Basic phospholipase A2 2 (70 aa).

Cysteine 28 and cysteine 44 are disulfide-bonded. The active site involves histidine 47. Aspartate 48 is a Ca(2+) binding site.

The protein belongs to the phospholipase A2 family. Group II subfamily. D49 sub-subfamily. Ca(2+) is required as a cofactor. As to expression, expressed by the venom gland.

It localises to the secreted. It carries out the reaction a 1,2-diacyl-sn-glycero-3-phosphocholine + H2O = a 1-acyl-sn-glycero-3-phosphocholine + a fatty acid + H(+). Its function is as follows. Snake venom phospholipase A2 (PLA2) that exhibits strong myotoxicity. PLA2 catalyzes the calcium-dependent hydrolysis of the 2-acyl groups in 3-sn-phosphoglycerides. This Trimeresurus stejnegeri (Chinese green tree viper) protein is Basic phospholipase A2 2.